Consider the following 2201-residue polypeptide: Tenascin (2201 aa).

Positions M1 to G22 are cleaved as a signal peptide. N-linked (GlcNAc...) asparagine glycosylation occurs at N38. 2 positions are modified to phosphoserine: S65 and S70. A Phosphoserine; by FAM20C modification is found at S72. S72 carries O-linked (Xyl...) (chondroitin sulfate) serine glycosylation. Residues D118–G145 adopt a coiled-coil conformation. N-linked (GlcNAc...) asparagine glycans are attached at residues N166 and N184. An EGF-like 1; incomplete domain is found at C174–S186. EGF-like domains lie at S186–S217, S217–S248, S248–N280, N280–S311, S311–G342, G342–S373, S373–G404, G404–S435, S435–S466, S466–R497, R497–A528, A528–K559, K559–G590, and G590–S621. Disulfide bonds link C190-C200, C194-C205, C207-C216, C221-C231, C225-C236, C238-C247, C252-C263, C256-C268, C270-C279, C284-C294, C288-C299, C301-C310, C315-C325, C319-C330, C332-C341, C346-C356, C350-C361, C363-C372, C377-C387, C381-C392, C394-C403, C408-C418, C412-C423, C425-C434, C439-C449, C443-C454, C456-C465, C470-C480, C474-C485, C487-C496, C501-C511, C505-C516, C518-C527, C532-C542, C536-C547, C549-C558, C563-C573, C567-C578, C580-C589, C594-C604, C598-C609, and C611-C620. A glycan (N-linked (GlcNAc...) asparagine) is linked at N327. Fibronectin type-III domains lie at P625–P715, E716–D804, A805–D894, A895–D990, L991–P1075, E1076–T1165, N1167–V1256, D1258–L1350, G1351–P1439, E1440–L1531, E1533–P1621, E1622–G1711, S1712–G1801, P1802–D1888, and S1889–L1977. A glycan (N-linked (GlcNAc...) asparagine) is linked at N788. At T905 the chain carries Phosphothreonine. 16 N-linked (GlcNAc...) asparagine glycosylation sites follow: N1018, N1034, N1079, N1093, N1119, N1184, N1210, N1261, N1275, N1301, N1366, N1392, N1445, N1455, N1485, and N1534. The N-linked (GlcNAc...) asparagine glycan is linked to N1809. A Fibrinogen C-terminal domain is found at G1975–N2190. N2162 is a glycosylation site (N-linked (GlcNAc...) asparagine).

This sequence belongs to the tenascin family. Homohexamer; disulfide-linked. A homotrimer may be formed in the triple coiled-coil region and may be stabilized by disulfide rings at both ends. Two of such half-hexabrachions may be disulfide linked within the central globule. Interacts with CSPG4. Interacts (via the 3rd fibronectin type-III domain) with integrin ITGA9:ITGB1. Detected in fibroblasts (at protein level).

Its subcellular location is the secreted. The protein resides in the extracellular space. It is found in the extracellular matrix. Functionally, extracellular matrix protein implicated in guidance of migrating neurons as well as axons during development, synaptic plasticity as well as neuronal regeneration. Promotes neurite outgrowth from cortical neurons grown on a monolayer of astrocytes. Ligand for integrins alpha-8/beta-1, alpha-9/beta-1, alpha-V/beta-3 and alpha-V/beta-6. In tumors, stimulates angiogenesis by elongation, migration and sprouting of endothelial cells. This is Tenascin (TNC) from Homo sapiens (Human).